A 632-amino-acid chain; its full sequence is Chaperone protein DnaK (632 aa).

The residue at position 198 (threonine 198) is a Phosphothreonine; by autocatalysis.

The protein belongs to the heat shock protein 70 family.

Its function is as follows. Acts as a chaperone. The protein is Chaperone protein DnaK of Rhodopseudomonas palustris (strain BisB18).